Here is a 239-residue protein sequence, read N- to C-terminus: Probable inner membrane transporter protein TsaS (239 aa).

4 helical membrane passes run 65–85 (AIGA…WLMG), 128–148 (GLVG…IALL), 160–180 (ATVP…LFGA), and 186–206 (AHTF…VVLG).

The protein belongs to the 4-toluene sulfonate uptake permease (TSUP) (TC 2.A.102) family. In terms of assembly, part of a two-component transport system composed of TsaT and TsaS.

The protein localises to the cell inner membrane. Involved in the uptake of p-toluenesulphonate (TSA). The chain is Probable inner membrane transporter protein TsaS (tsaS) from Comamonas testosteroni (Pseudomonas testosteroni).